We begin with the raw amino-acid sequence, 334 residues long: Ornithine carbamoyltransferase (334 aa).

Residues 57-60 (STRT), Arg-108, and 135-138 (HPTQ) each bind carbamoyl phosphate. L-ornithine contacts are provided by residues Asn-168, Asp-232, and 236–237 (SM). Carbamoyl phosphate is bound by residues 274-275 (CL) and Arg-321.

Belongs to the aspartate/ornithine carbamoyltransferase superfamily. OTCase family.

Its subcellular location is the cytoplasm. It carries out the reaction carbamoyl phosphate + L-ornithine = L-citrulline + phosphate + H(+). It participates in amino-acid biosynthesis; L-arginine biosynthesis; L-arginine from L-ornithine and carbamoyl phosphate: step 1/3. Reversibly catalyzes the transfer of the carbamoyl group from carbamoyl phosphate (CP) to the N(epsilon) atom of ornithine (ORN) to produce L-citrulline. In Cutibacterium acnes (strain DSM 16379 / KPA171202) (Propionibacterium acnes), this protein is Ornithine carbamoyltransferase.